The sequence spans 405 residues: Dynactin subunit 2 (405 aa).

The tract at residues Met1–Asp24 is disordered. 2 coiled-coil regions span residues Gln102–Ser125 and Gln379–Lys405.

This sequence belongs to the dynactin subunit 2 family. In terms of assembly, subunit of dynactin, a multiprotein complex part of a tripartite complex with dynein and a adapter, such as BICDL1, BICD2 or HOOK3. The dynactin complex is built around ACTR1A/ACTB filament and consists of an actin-related filament composed of a shoulder domain, a pointed end and a barbed end. Its length is defined by its flexible shoulder domain. The soulder is composed of 2 DCTN1 subunits, 4 DCTN2 and 2 DCTN3.

Its subcellular location is the cytoplasm. The protein localises to the cytoskeleton. It localises to the microtubule organizing center. It is found in the centrosome. The protein resides in the membrane. Part of the dynactin complex that activates the molecular motor dynein for ultra-processive transport along microtubules. In the dynactin soulder domain, binds the ACTR1A filament and acts as a molecular ruler to determine the length. Modulates cytoplasmic dynein binding to an organelle, and plays a role in prometaphase chromosome alignment and spindle organization during mitosis. Involved in anchoring microtubules to centrosomes. In Danio rerio (Zebrafish), this protein is Dynactin subunit 2 (dctn2).